A 128-amino-acid polypeptide reads, in one-letter code: uncharacterized protein (128 aa).

This is an uncharacterized protein from Mycoplasma pneumoniae (strain ATCC 29342 / M129 / Subtype 1) (Mycoplasmoides pneumoniae).